Consider the following 37-residue polypeptide: Mu-cyrtautoxin-As1a (37 aa).

Cystine bridges form between Cys1–Cys15, Cys8–Cys19, Cys14–Cys35, and Cys26–Cys31.

Belongs to the neurotoxin 13 (insecticidal toxin ABC) family. 01 (Aps III) subfamily. In terms of tissue distribution, expressed by the venom gland.

It is found in the secreted. Its function is as follows. The recombinant mu-cyrtautoxin-As1a potently and voltage-independently blocks voltage-gated sodium channels (Nav) of insects. It acts by pluging the outer vestibule of the channel. It acts in combination with a weak (30%) voltage-independent block of insect voltage-gated calcium (Cav) channels (low-voltage and high-voltage channels). Tested on DUM neurons, it inhibits sodium currents with an IC(50) of 540 nM (and a Hill coefficient &gt;1, reflecting an incomplete block at higher concentrations). In vivo, it induces flaccid paralysis in adult Australian sheep blowfly Lucilia cuprina. It is both paralytic and lethal, when injected into lepidopteran larvae. It is a slower acting toxin, being lethal at 24 hours, but not paralytic at 1 hour post-injection. The polypeptide is Mu-cyrtautoxin-As1a (Apomastus schlingeri (Trap-door spider)).